The chain runs to 638 residues: Sodium- and chloride-dependent glycine transporter 1 (638 aa).

Residues Met-1–Leu-30 are disordered. Residues Met-1–Glu-40 lie on the Cytoplasmic side of the membrane. 3 helical membrane-spanning segments follow: residues Phe-41 to Leu-61, Gly-68 to Met-88, and Val-120 to Phe-140. At Ser-141–Glu-217 the chain is on the extracellular side. N-linked (GlcNAc...) asparagine glycosylation is found at Asn-169, Asn-172, Asn-182, and Asn-188. A run of 9 helical transmembrane segments spans residues Val-218–Ile-238, Val-247–Val-267, Val-292–Ile-312, Ser-339–Val-359, Leu-382–Leu-402, Val-438–Leu-458, Tyr-462–Ile-482, Leu-502–Phe-522, and Val-542–Phe-562. Over Gln-563–Ile-638 the chain is Cytoplasmic. Position 603 is a phosphothreonine (Thr-603). Phosphoserine occurs at positions 605 and 630. The interval Ser-627 to Ile-638 is essential for interaction with EXOC1.

The protein belongs to the sodium:neurotransmitter symporter (SNF) (TC 2.A.22) family. SLC6A9 subfamily. In terms of assembly, interacts with EXOC1; interaction increases the transporter capacity of SLC6A9 probably by promoting its insertion into the cell membrane. Interacts with EXOC3 and EXOC4. In terms of tissue distribution, found only in the white matter of the CNS. Found in the gray matter of CNS as well as in macrophages and mast cells in peripheral tissues.

The protein localises to the cell membrane. The catalysed reaction is glycine(out) + chloride(out) + 2 Na(+)(out) = glycine(in) + chloride(in) + 2 Na(+)(in). Inhibited by sarcosine. Sodium- and chloride-dependent glycine transporter. Essential for regulating glycine concentrations at inhibitory glycinergic synapses. In Rattus norvegicus (Rat), this protein is Sodium- and chloride-dependent glycine transporter 1 (Slc6a9).